The primary structure comprises 53 residues: UPF0391 membrane protein PA5482 (53 aa).

2 helical membrane passes run 4 to 24 and 29 to 49; these read WAIT…GGIA and GIAK…FFFG.

It belongs to the UPF0391 family.

It is found in the cell membrane. The protein is UPF0391 membrane protein PA5482 of Pseudomonas aeruginosa (strain ATCC 15692 / DSM 22644 / CIP 104116 / JCM 14847 / LMG 12228 / 1C / PRS 101 / PAO1).